The sequence spans 353 residues: Vomeronasal type-1 receptor 1 (353 aa).

The Extracellular segment spans residues 1 to 56 (MVGDTLKLLSPLMTRYFFLLFYSTDSSDLNENQHPLDFDEMAFGKVKSGISFLIQT). The chain crosses the membrane as a helical span at residues 57–77 (GVGILGNSFLLCFYNLILFTG). Residues 78 to 84 (HKLRPTD) are Cytoplasmic-facing. Residues 85-105 (LILSHLALANSMVLFFKGIPQ) form a helical membrane-spanning segment. Residues 106–132 (TMAAFGLKYLLNDTGCKFVFYYHRVGT) lie on the Extracellular side of the membrane. Asparagine 117 is a glycosylation site (N-linked (GlcNAc...) asparagine). Residues 133 to 153 (RVSLSTICLLNGFQAIKLNPS) traverse the membrane as a helical segment. Topologically, residues 154–169 (ICRWMEIKIRSPRFID) are cytoplasmic. A helical transmembrane segment spans residues 170 to 190 (FCCLLCWVPHVLMNASVLLLV). At 191-226 (NGPLNSKNSSAKNNYGYCSYKASKRFSSLHAVLYFS) the chain is on the extracellular side. The N-linked (GlcNAc...) asparagine glycan is linked to asparagine 198. The helical transmembrane segment at 227–247 (PDFMSLGFMVWASGSMVFFLY) threads the bilayer. The Cytoplasmic portion of the chain corresponds to 248 to 274 (RHKQQVQHNHSNRLSCRPSQETRATRT). Residues 275 to 295 (IMVLVSSFFVFYSVHSFLTIW) traverse the membrane as a helical segment. Residues 296–303 (TTVVANPG) lie on the Extracellular side of the membrane. The helical transmembrane segment at 304–324 (QWIVNNSVLVASYFPSRSPFV) threads the bilayer. Over 325-353 (LIMSDTRISQFCFACRTRKTLFPNLVVMP) the chain is Cytoplasmic.

The protein belongs to the G-protein coupled receptor 1 family.

The protein localises to the cell membrane. Putative pheromone receptor. This is Vomeronasal type-1 receptor 1 (VN1R1) from Gorilla gorilla gorilla (Western lowland gorilla).